The primary structure comprises 463 residues: Endoglucanase EG-1 (463 aa).

An N-terminal signal peptide occupies residues 1 to 22; sequence MAPSATLPLTTAILAIGRLVAA. The tract at residues 23–397 is catalytic; that stretch reads QQPGTSTPEV…DIGSTTNSTG (375 aa). N-linked (GlcNAc...) asparagine glycans are attached at residues Asn-78, Asn-164, Asn-204, and Asn-208. Glu-218 (nucleophile) is an active-site residue. Residue Glu-223 is the Proton donor of the active site. Positions 390–429 are disordered; it reads GSTTNSTGGNPPPPPPPASSTTFSTTRRSSTTSSSPSCTQ. Asn-394 carries N-linked (GlcNAc...) asparagine glycosylation. Residues 402-427 are linker; that stretch reads PPPPPASSTTFSTTRRSSTTSSSPSC. A compositionally biased stretch (low complexity) spans 408 to 429; sequence SSTTFSTTRRSSTTSSSPSCTQ. In terms of domain architecture, CBM1 spans 427–463; the sequence is CTQTHWGQCGGIGYTGCKTCTSGTTCQYGNDYYSQCL. 2 disulfide bridges follow: Cys-435-Cys-452 and Cys-446-Cys-462.

The protein belongs to the glycosyl hydrolase 7 (cellulase C) family.

The protein resides in the secreted. The catalysed reaction is Endohydrolysis of (1-&gt;4)-beta-D-glucosidic linkages in cellulose, lichenin and cereal beta-D-glucans.. The biological conversion of cellulose to glucose generally requires three types of hydrolytic enzymes: (1) Endoglucanases which cut internal beta-1,4-glucosidic bonds; (2) Exocellobiohydrolases that cut the disaccharide cellobiose from the non-reducing end of the cellulose polymer chain; (3) Beta-1,4-glucosidases which hydrolyze the cellobiose and other short cello-oligosaccharides to glucose. The sequence is that of Endoglucanase EG-1 (egl1) from Trichoderma longibrachiatum.